The primary structure comprises 356 residues: DNA polymerase IV (356 aa).

A UmuC domain is found at 7–188 (IIHIDMDCFY…LPLKKISGVG (182 aa)). 2 residues coordinate Mg(2+): aspartate 11 and aspartate 106. Glutamate 107 is an active-site residue.

Belongs to the DNA polymerase type-Y family. Monomer. The cofactor is Mg(2+).

It is found in the cytoplasm. The enzyme catalyses DNA(n) + a 2'-deoxyribonucleoside 5'-triphosphate = DNA(n+1) + diphosphate. In terms of biological role, poorly processive, error-prone DNA polymerase involved in untargeted mutagenesis. Copies undamaged DNA at stalled replication forks, which arise in vivo from mismatched or misaligned primer ends. These misaligned primers can be extended by PolIV. Exhibits no 3'-5' exonuclease (proofreading) activity. May be involved in translesional synthesis, in conjunction with the beta clamp from PolIII. The polypeptide is DNA polymerase IV (Glaesserella parasuis serovar 5 (strain SH0165) (Haemophilus parasuis)).